Here is a 2547-residue protein sequence, read N- to C-terminus: Lovastatin diketide synthase mokB (2547 aa).

A Ketosynthase family 3 (KS3) domain is found at 10–430 (PTPIAVVGMG…GANAHAIVER (421 aa)). Residues cysteine 183, histidine 318, and histidine 353 each act as for beta-ketoacyl synthase activity in the active site. Residues 545–890 (VFTGQGAQWF…MDLLQGGYPV (346 aa)) form an acyl and malonyl transferase region. The active-site For malonyltransferase activity is the serine 635. The tract at residues 941-1079 (HDLIGVQEPL…GLIRAQVDHP (139 aa)) is N-terminal hotdog fold. The PKS/mFAS DH domain occupies 941-1252 (HDLIGVQEPL…FQSLGAVISD (312 aa)). The Proton acceptor; for dehydratase activity role is filled by histidine 973. The interval 973–985 (HVVGSRILFPGAG) is dehydratase-like. The tract at residues 1095 to 1252 (SRKMAPQDLW…FQSLGAVISD (158 aa)) is C-terminal hotdog fold. Residue aspartate 1160 is the Proton donor; for dehydratase activity of the active site. Residues cysteine 1340 and cysteine 1379 are joined by a disulfide bond. Positions 1510–1547 (YDVVLACQVLHATSNMQRTLNNVRKLLKPGGKLILVET) are methyltransferase. The region spanning 2459-2541 (ASTEEEATAL…EVAEVVVKKY (83 aa)) is the Carrier domain. Serine 2501 carries the post-translational modification O-(pantetheine 4'-phosphoryl)serine.

Pantetheine 4'-phosphate is required as a cofactor.

The catalysed reaction is holo-[2-methylbutanoate polyketide synthase] + 2 malonyl-CoA + S-adenosyl-L-methionine + 2 NADPH + 3 H(+) = (S)-2-methylbutanoyl-[2-methylbutanoate polyketide synthase] + S-adenosyl-L-homocysteine + 2 CO2 + 2 NADP(+) + 2 CoA + H2O. It functions in the pathway polyketide biosynthesis; lovastatin biosynthesis. Diketide synthase; part of the gene cluster that mediates the biosynthesis of monakolin K, also known as lovastatin, and which acts as a potent competitive inhibitor of HMG-CoA reductase. Monakolin K biosynthesis is performed in two stages. The first stage is catalyzed by the nonaketide synthase mokA, which belongs to type I polyketide synthases and catalyzes the iterative nine-step formation of the polyketide. This PKS stage completed by the action of dehydrogenase mokE, which catalyzes the NADPH-dependent reduction of the unsaturated tetra-, penta- and heptaketide intermediates that arise during the mokA-mediated biosynthesis of the nonaketide chain and leads to dihydromonacolin L. Covalently bound dihydromonacolin L is released from mokA by the mokD esterase. Conversion of dihydromonacolin L into monacolin L and then monacolin J is subsequently performed with the participation of molecular oxygen and P450 monoogygenase mokC. Finally, mokF performs the conversion of monacoline J to monacoline K through the addition of the side-chain diketide moiety (2R)-2-methylbutanoate produced by the diketide synthase mokB. This Monascus pilosus (Red mold) protein is Lovastatin diketide synthase mokB.